The sequence spans 427 residues: MMEYKIVENGLTYRIGNGASVPISNTGELIKGLRNYGPYEVPSLKYNQIALIHNNQFSSLINQLKSQISSKIDEVWHIHNINISEFIYDSPHFDSIKSQVDNAIDTGVDGIMLVLPEYNTPLYYKLKSYLINSIPSQFMRYDILSNRNLTFYVDNLLVQFVSKLGGKPWILNVDPEKGSDIIIGTGATRIDNVNLFCFAMVFKKDGTMLWNEISPIVTSSEYLTYLKSTIKKVVYGFKKSNPDWDVEKLTLHVSGKRPKMKDGETKILKETVEELKKQEMVSRDVKYAILHLNETHPFWVMGDPNNRFHPYEGTKVKLSSKRYLLTLLQPYLKRNGLEMVTPIKPLSVEIVSDNWTSEEYYHNVHEILDEIYYLSKMNWRGFRSRNLPVTVNYPKLVAGIIANVNRYGGYPINPEGNRSLQTNPWFL.

A mid domain region spans residues 38 to 167; it reads PYEVPSLKYN…VQFVSKLGGK (130 aa). Positions 110 to 406 constitute a Piwi domain; that stretch reads GIMLVLPEYN…VAGIIANVNR (297 aa). The segment at 118-124 is binds 5'-phosphorylated end of guide DNA; the sequence is YNTPLYY. Positions 147–148 are binds target DNA; the sequence is RN. The tract at residues 150 to 155 is binds guide DNA; that stretch reads TFYVDN. A divalent metal cation contacts are provided by Gln159 and Leu427. The tract at residues 168 to 427 is PIWI domain; it reads PWILNVDPEK…RSLQTNPWFL (260 aa).

Belongs to the argonaute family. Short pAgo subfamily. As to quaternary structure, homodimer probably stabilized by DNA. Each subunit is capable of interacting with a DNA molecule. It depends on a divalent metal cation as a cofactor.

Its function is as follows. Might play a role in defense against invading genetic elements, using short nucleic acid sequences as guides to bind complementary target strands, resulting in slicing of the target nucleic acid. Binds nucleic acids with decreasing affinity in the following order; ssDNA, ssRNA, dsDNA, RNA-DNA, RNA-RNA. Association of the 5' seed region of the guide strand (nucleotides 2-7) with AfPiwi increases affinity for the corresponding target strand; the greatest increase in affinity is for guide DNA with target RNA. The polypeptide is Piwi protein (Archaeoglobus fulgidus (strain ATCC 49558 / DSM 4304 / JCM 9628 / NBRC 100126 / VC-16)).